The primary structure comprises 892 residues: Putative VWFA domain-containing protein ORF892 (892 aa).

Residues 109–548 (EEQLQRRPQR…RGYAHGDEDL (440 aa)) form a disordered region. Over residues 129-142 (SEVANQRVSRSAEN) the composition is skewed to polar residues. Residues 143–162 (QGKRGNEEKQQQKTPGKTEE) are compositionally biased toward basic and acidic residues. A compositionally biased stretch (acidic residues) spans 169-184 (ESGEEGNQQEESGEEQ). The span at 185 to 196 (EGVKGSRSKQRE) shows a compositional bias: basic and acidic residues. Residues 212 to 223 (ESGESESEEGQS) are compositionally biased toward acidic residues. Low complexity-rich tracts occupy residues 224-238 (SEETQLSSSGEGNQQ) and 271-283 (GNGQESSGEAQNG). A compositionally biased stretch (acidic residues) spans 287–300 (GESEGEITESESAS). Residues 301-323 (EEQTGSKGKSGQQGEEGQQQSGS) show a composition bias toward low complexity. Composition is skewed to acidic residues over residues 324–336 (EGEEGAEQEESGE) and 425–448 (SESEEGQSPEETQEGGEGGAETEE). Over residues 453–466 (SEAEGTAAEGEVGQ) the composition is skewed to low complexity. 2 stretches are compositionally biased toward polar residues: residues 467–481 (PSEQGVSSSTGSGQR) and 512–531 (QTGSSSESAGSEQLGSQQGE). Basic and acidic residues predominate over residues 536–546 (EGGRGYAHGDE). Residues 553–620 (QEINSILQTL…VQKLLKDLNV (68 aa)) adopt a coiled-coil conformation. Positions 723–892 (DFLFVIDSSG…GNIVLKRLVH (170 aa)) constitute a VWFA domain.

The polypeptide is Putative VWFA domain-containing protein ORF892 (Acidianus two-tailed virus (ATV)).